Consider the following 383-residue polypeptide: Acetylornithine deacetylase (383 aa).

H80 serves as a coordination point for Zn(2+). The active site involves D82. D112 is a Zn(2+) binding site. Residue E144 is part of the active site. Zn(2+)-binding residues include E145, E169, and H355.

It belongs to the peptidase M20A family. ArgE subfamily. Homodimer. Zn(2+) is required as a cofactor. It depends on Co(2+) as a cofactor. Requires glutathione as cofactor.

It is found in the cytoplasm. The catalysed reaction is N(2)-acetyl-L-ornithine + H2O = L-ornithine + acetate. It functions in the pathway amino-acid biosynthesis; L-arginine biosynthesis; L-ornithine from N(2)-acetyl-L-ornithine (linear): step 1/1. In terms of biological role, catalyzes the hydrolysis of the amide bond of N(2)-acetylated L-amino acids. Cleaves the acetyl group from N-acetyl-L-ornithine to form L-ornithine, an intermediate in L-arginine biosynthesis pathway, and a branchpoint in the synthesis of polyamines. In Shigella boydii serotype 4 (strain Sb227), this protein is Acetylornithine deacetylase.